A 400-amino-acid polypeptide reads, in one-letter code: Small ribosomal subunit protein bS1 (400 aa).

S1 motif domains follow at residues 17 to 87 (GDVV…VTYL), 107 to 173 (EEVV…LSRR), 194 to 262 (GDVV…LSLK), and 279 to 348 (GDVV…LSIK). A compositionally biased stretch (basic and acidic residues) spans 351-366 (EERPAQEEGQKEEKRA). The tract at residues 351–400 (EERPAQEEGQKEEKRAARPRRPRRQEKRDFELPETQTGFSMADLFGDIEL) is disordered.

Belongs to the bacterial ribosomal protein bS1 family. Post-translationally, phosphorylated.

Binds mRNA; thus facilitating recognition of the initiation point. It is needed to translate mRNA with a short Shine-Dalgarno (SD) purine-rich sequence. The polypeptide is Small ribosomal subunit protein bS1 (rpsA) (Streptococcus pneumoniae (strain ATCC BAA-255 / R6)).